The sequence spans 263 residues: Histidine racemase (263 aa).

Residue Cys-67 is the Proton acceptor of the active site. The active-site Proton donor is Cys-209.

Belongs to the histidine racemase family. Homodimer.

It carries out the reaction L-histidine = D-histidine. Functionally, cofactor-independent isomerase that catalyzes the reversible conversion of L-histidine to D-histidine. May play a role in growth of F.nucleatum. In Fusobacterium nucleatum subsp. nucleatum (strain ATCC 23726 / VPI 4351), this protein is Histidine racemase.